We begin with the raw amino-acid sequence, 329 residues long: Peroxidase 17 (329 aa).

The N-terminal stretch at 1 to 19 (MSLLPHLILYLTLLTVVVT) is a signal peptide. 4 cysteine pairs are disulfide-bonded: Cys-32/Cys-112, Cys-65/Cys-70, Cys-118/Cys-315, and Cys-197/Cys-229. The active-site Proton acceptor is the His-63. Positions 64, 67, 69, 71, and 73 each coordinate Ca(2+). Pro-160 serves as a coordination point for substrate. N-linked (GlcNAc...) asparagine glycosylation is found at Asn-165 and Asn-177. Heme b is bound at residue His-190. Residue Ser-191 coordinates Ca(2+). Asn-206 and Asn-236 each carry an N-linked (GlcNAc...) asparagine glycan. Ca(2+)-binding residues include Asp-242, Thr-244, and Asp-249.

It belongs to the peroxidase family. Classical plant (class III) peroxidase subfamily. Requires heme b as cofactor. Ca(2+) serves as cofactor.

It localises to the secreted. The protein resides in the vacuole. The enzyme catalyses 2 a phenolic donor + H2O2 = 2 a phenolic radical donor + 2 H2O. In terms of biological role, removal of H(2)O(2), oxidation of toxic reductants, biosynthesis and degradation of lignin, suberization, auxin catabolism, response to environmental stresses such as wounding, pathogen attack and oxidative stress. These functions might be dependent on each isozyme/isoform in each plant tissue. In Arabidopsis thaliana (Mouse-ear cress), this protein is Peroxidase 17 (PER17).